The following is a 418-amino-acid chain: AA11 family lytic polysaccharide monooxygenase B (418 aa).

A signal peptide spans 1 to 21 (MMFSKSGLVAVAMLGASAVEA). His-22 and His-82 together coordinate Cu(+). 3 cysteine pairs are disulfide-bonded: Cys-50-Cys-165, Cys-87-Cys-113, and Cys-206-Cys-240. 2 N-linked (GlcNAc...) asparagine glycosylation sites follow: Asn-120 and Asn-134. The tract at residues 226 to 345 (DGNPSNLQPA…SSSSSNGALT (120 aa)) is disordered. Low complexity predominate over residues 254 to 345 (SPSTPSTSSS…SSSSSNGALT (92 aa)).

Belongs to the polysaccharide monooxygenase AA11 family. Cu(2+) is required as a cofactor.

Its subcellular location is the secreted. Lytic polysaccharide monooxygenase (LPMO)-like protein that acts as a strict peroxygenase and does not catalyze a monooxygenase reaction. It is indeed hardly active on chitin, while being very active on soluble oligomers of N-acetylglucosamine. Cleaves the glycosidic bonds byoxidizing the C1 position. Also unable to oxidize cellopentaose. Probably breaks glycosidic bonds in non-polymeric substrates possibly carbohydrates in the cell wall of the fungus or its competitors. In the presence of chitotetraose, the enzyme can withstand considerable amounts of H(2)O(2), which it uses to efficiently and stoichiometrically convert this substrate. The sequence is that of AA11 family lytic polysaccharide monooxygenase B from Aspergillus fumigatus (strain ATCC MYA-4609 / CBS 101355 / FGSC A1100 / Af293) (Neosartorya fumigata).